Here is a 464-residue protein sequence, read N- to C-terminus: Glutamate--tRNA ligase 1 (464 aa).

The short motif at 8 to 18 (PSPTGHLHVGG) is the 'HIGH' region element. A 'KMSKS' region motif is present at residues 231–235 (PLSKR). Residue Lys-234 participates in ATP binding.

Belongs to the class-I aminoacyl-tRNA synthetase family. Glutamate--tRNA ligase type 1 subfamily. In terms of assembly, monomer.

It is found in the cytoplasm. The catalysed reaction is tRNA(Glu) + L-glutamate + ATP = L-glutamyl-tRNA(Glu) + AMP + diphosphate. Catalyzes the attachment of glutamate to tRNA(Glu) in a two-step reaction: glutamate is first activated by ATP to form Glu-AMP and then transferred to the acceptor end of tRNA(Glu). The protein is Glutamate--tRNA ligase 1 of Thermotoga petrophila (strain ATCC BAA-488 / DSM 13995 / JCM 10881 / RKU-1).